Here is a 217-residue protein sequence, read N- to C-terminus: Putative thymidylate synthase (217 aa).

Residue Cys-139 is part of the active site.

The protein belongs to the thymidylate synthase family. Archaeal-type ThyA subfamily. As to quaternary structure, monomer.

The protein resides in the cytoplasm. Its pathway is pyrimidine metabolism; dTTP biosynthesis. May catalyze the biosynthesis of dTMP using an unknown cosubstrate. The chain is Putative thymidylate synthase from Methanosarcina acetivorans (strain ATCC 35395 / DSM 2834 / JCM 12185 / C2A).